The following is a 229-amino-acid chain: Ribonuclease HII (229 aa).

Residues 34–223 (WPVAGADEAG…LRKSEDGPEM (190 aa)) enclose the RNase H type-2 domain. Asp40, Glu41, and Asp131 together coordinate a divalent metal cation. Residues 209–229 (MSFRPLRKSEDGPEMDELIPE) form a disordered region. The segment covering 220 to 229 (GPEMDELIPE) has biased composition (acidic residues).

It belongs to the RNase HII family. Mn(2+) serves as cofactor. The cofactor is Mg(2+).

It is found in the cytoplasm. It carries out the reaction Endonucleolytic cleavage to 5'-phosphomonoester.. In terms of biological role, endonuclease that specifically degrades the RNA of RNA-DNA hybrids. The chain is Ribonuclease HII from Rhizobium etli (strain CIAT 652).